Reading from the N-terminus, the 113-residue chain is Putative pterin-4-alpha-carbinolamine dehydratase (113 aa).

The protein belongs to the pterin-4-alpha-carbinolamine dehydratase family.

The catalysed reaction is (4aS,6R)-4a-hydroxy-L-erythro-5,6,7,8-tetrahydrobiopterin = (6R)-L-erythro-6,7-dihydrobiopterin + H2O. This is Putative pterin-4-alpha-carbinolamine dehydratase from Nitrosospira multiformis (strain ATCC 25196 / NCIMB 11849 / C 71).